The chain runs to 171 residues: 3-hydroxydecanoyl-[acyl-carrier-protein] dehydratase (171 aa).

Histidine 70 is an active-site residue.

Belongs to the thioester dehydratase family. FabA subfamily. As to quaternary structure, homodimer.

The protein localises to the cytoplasm. The enzyme catalyses a (3R)-hydroxyacyl-[ACP] = a (2E)-enoyl-[ACP] + H2O. It carries out the reaction (3R)-hydroxydecanoyl-[ACP] = (2E)-decenoyl-[ACP] + H2O. The catalysed reaction is (2E)-decenoyl-[ACP] = (3Z)-decenoyl-[ACP]. The protein operates within lipid metabolism; fatty acid biosynthesis. Necessary for the introduction of cis unsaturation into fatty acids. Catalyzes the dehydration of (3R)-3-hydroxydecanoyl-ACP to E-(2)-decenoyl-ACP and then its isomerization to Z-(3)-decenoyl-ACP. Can catalyze the dehydratase reaction for beta-hydroxyacyl-ACPs with saturated chain lengths up to 16:0, being most active on intermediate chain length. The protein is 3-hydroxydecanoyl-[acyl-carrier-protein] dehydratase of Shewanella baltica (strain OS223).